Reading from the N-terminus, the 233-residue chain is tRNA (guanine-N(7)-)-methyltransferase (233 aa).

Residues Met1–Pro22 form a disordered region. S-adenosyl-L-methionine is bound by residues Glu64, Glu89, Asp116, and Asp138. Asp138 is an active-site residue. Substrate is bound by residues Lys142, Asp174, and Thr212 to Glu215.

The protein belongs to the class I-like SAM-binding methyltransferase superfamily. TrmB family.

It carries out the reaction guanosine(46) in tRNA + S-adenosyl-L-methionine = N(7)-methylguanosine(46) in tRNA + S-adenosyl-L-homocysteine. The protein operates within tRNA modification; N(7)-methylguanine-tRNA biosynthesis. In terms of biological role, catalyzes the formation of N(7)-methylguanine at position 46 (m7G46) in tRNA. This chain is tRNA (guanine-N(7)-)-methyltransferase, found in Brucella abortus (strain 2308).